The chain runs to 137 residues: Small ribosomal subunit protein uS12 (137 aa).

Disordered stretches follow at residues 1-22 (MPTINQLVRKPRKSKVSKSKSP) and 35-57 (ATNNAAPQKRGVATRVGTMTPKK). Basic residues predominate over residues 9–18 (RKPRKSKVSK). Aspartate 102 is modified (3-methylthioaspartic acid).

The protein belongs to the universal ribosomal protein uS12 family. As to quaternary structure, part of the 30S ribosomal subunit. Contacts proteins S8 and S17. May interact with IF1 in the 30S initiation complex.

Its function is as follows. With S4 and S5 plays an important role in translational accuracy. In terms of biological role, interacts with and stabilizes bases of the 16S rRNA that are involved in tRNA selection in the A site and with the mRNA backbone. Located at the interface of the 30S and 50S subunits, it traverses the body of the 30S subunit contacting proteins on the other side and probably holding the rRNA structure together. The combined cluster of proteins S8, S12 and S17 appears to hold together the shoulder and platform of the 30S subunit. In Leuconostoc mesenteroides subsp. mesenteroides (strain ATCC 8293 / DSM 20343 / BCRC 11652 / CCM 1803 / JCM 6124 / NCDO 523 / NBRC 100496 / NCIMB 8023 / NCTC 12954 / NRRL B-1118 / 37Y), this protein is Small ribosomal subunit protein uS12.